A 42-amino-acid polypeptide reads, in one-letter code: MQDLKTYLSVAPVLSTLWFGILAGLLIEINRLFPDALLFPFF.

The helical transmembrane segment at 7–27 threads the bilayer; sequence YLSVAPVLSTLWFGILAGLLI.

The protein belongs to the PsaJ family.

The protein localises to the plastid. It is found in the chloroplast thylakoid membrane. Its function is as follows. May help in the organization of the PsaE and PsaF subunits. The polypeptide is Photosystem I reaction center subunit IX (Lemna minor (Common duckweed)).